The sequence spans 115 residues: HTH-type transcriptional regulator SarR (115 aa).

The H-T-H motif DNA-binding region spans 51–74; it reads SKEIAKCSEFKPYYLTKALQKLKD.

It belongs to the SarA family. In terms of assembly, homodimer.

It is found in the cytoplasm. In terms of biological role, negative regulator of sarA transcription at late exponential and stationary growth phases. It contributes to the modulation of target genes downstream of the sarA regulatory cascade. Also, positively regulates expression of primary transcripts RNAII and RNAIII generated by agr (virulence accessory gene regulator) locus. This Staphylococcus aureus (strain NCTC 8325 / PS 47) protein is HTH-type transcriptional regulator SarR (sarR).